The primary structure comprises 1073 residues: Carbamoyl phosphate synthase large chain (1073 aa).

The carboxyphosphate synthetic domain stretch occupies residues 1–402 (MPRRIDVRKV…ALQKAIRMLD (402 aa)). Arg129, Arg169, Gly175, Gly176, Lys208, Leu210, Glu215, Gly241, Val242, His243, Gln284, and Glu299 together coordinate ATP. Residues 133 to 328 (RETMMKAGLP…LAYIAAKLAL (196 aa)) enclose the ATP-grasp 1 domain. Mg(2+)-binding residues include Gln284, Glu299, and Asn301. Gln284, Glu299, and Asn301 together coordinate Mn(2+). An oligomerization domain region spans residues 403–555 (IGEPGVVAGP…MSYNAYEDDE (153 aa)). The interval 556 to 944 (PITTGRPRLI…LKSWLSVQGN (389 aa)) is carbamoyl phosphate synthetic domain. The region spanning 681 to 871 (SQLLEELGIK…LMRAAAEAAL (191 aa)) is the ATP-grasp 2 domain. 10 residues coordinate ATP: Arg717, Lys756, Leu758, Glu763, Gly787, Val788, His789, Ser790, Gln830, and Glu842. Residues Gln830, Glu842, and Asn844 each coordinate Mg(2+). 3 residues coordinate Mn(2+): Gln830, Glu842, and Asn844. The MGS-like domain occupies 944–1073 (NRIPPAGSIV…EYWGPNVEPF (130 aa)). Residues 945-1073 (RIPPAGSIVL…EYWGPNVEPF (129 aa)) are allosteric domain.

It belongs to the CarB family. In terms of assembly, composed of two chains; the small (or glutamine) chain promotes the hydrolysis of glutamine to ammonia, which is used by the large (or ammonia) chain to synthesize carbamoyl phosphate. Tetramer of heterodimers (alpha,beta)4. Mg(2+) serves as cofactor. Mn(2+) is required as a cofactor.

It carries out the reaction hydrogencarbonate + L-glutamine + 2 ATP + H2O = carbamoyl phosphate + L-glutamate + 2 ADP + phosphate + 2 H(+). The enzyme catalyses hydrogencarbonate + NH4(+) + 2 ATP = carbamoyl phosphate + 2 ADP + phosphate + 2 H(+). It participates in amino-acid biosynthesis; L-arginine biosynthesis; carbamoyl phosphate from bicarbonate: step 1/1. It functions in the pathway pyrimidine metabolism; UMP biosynthesis via de novo pathway; (S)-dihydroorotate from bicarbonate: step 1/3. Its function is as follows. Large subunit of the glutamine-dependent carbamoyl phosphate synthetase (CPSase). CPSase catalyzes the formation of carbamoyl phosphate from the ammonia moiety of glutamine, carbonate, and phosphate donated by ATP, constituting the first step of 2 biosynthetic pathways, one leading to arginine and/or urea and the other to pyrimidine nucleotides. The large subunit (synthetase) binds the substrates ammonia (free or transferred from glutamine from the small subunit), hydrogencarbonate and ATP and carries out an ATP-coupled ligase reaction, activating hydrogencarbonate by forming carboxy phosphate which reacts with ammonia to form carbamoyl phosphate. The protein is Carbamoyl phosphate synthase large chain of Hyperthermus butylicus (strain DSM 5456 / JCM 9403 / PLM1-5).